The chain runs to 811 residues: Exocyst complex component 6B (811 aa).

A coiled-coil region spans residues Met-50–Gln-119. Residues Ser-260–Asp-280 form a disordered region.

This sequence belongs to the SEC15 family. The exocyst complex is composed of SEC3, SEC5, SEC6, SEC8, SEC10, SEC15, EXO70 and EXO84.

In terms of biological role, component of the exocyst complex involved in the docking of exocytic vesicles with fusion sites on the plasma membrane. The polypeptide is Exocyst complex component 6B (EXOC6B) (Homo sapiens (Human)).